A 181-amino-acid chain; its full sequence is UPF0397 protein str0306 (181 aa).

A run of 5 helical transmembrane segments spans residues A11–F31, L45–L65, G72–F92, I109–I129, and F147–I167.

The protein belongs to the UPF0397 family.

It localises to the cell membrane. The protein is UPF0397 protein str0306 of Streptococcus thermophilus (strain CNRZ 1066).